The chain runs to 165 residues: MDLKSLIRDVPDFPKPGIIFRDMSPLLQNAEALSFVSHNLLKHVDLTHVDYFAGIESRGFILAAHMAATHKKGFLPIRKAGKLPPPTRKVSYALEYGTAEIELPPGRGNVVIVDDVLATGGTLQAAIDLCLLAGYSVESVAVLVNLTFLNKMTYNDQKVASLVQY.

It belongs to the purine/pyrimidine phosphoribosyltransferase family. In terms of assembly, homodimer.

The protein localises to the cytoplasm. It carries out the reaction AMP + diphosphate = 5-phospho-alpha-D-ribose 1-diphosphate + adenine. The protein operates within purine metabolism; AMP biosynthesis via salvage pathway; AMP from adenine: step 1/1. Functionally, catalyzes a salvage reaction resulting in the formation of AMP, that is energically less costly than de novo synthesis. The chain is Adenine phosphoribosyltransferase from Bdellovibrio bacteriovorus (strain ATCC 15356 / DSM 50701 / NCIMB 9529 / HD100).